We begin with the raw amino-acid sequence, 309 residues long: HPr kinase/phosphorylase (309 aa).

Residues His-138 and Lys-159 contribute to the active site. 153-160 (GQSGVGKS) is an ATP binding site. Ser-160 lines the Mg(2+) pocket. Catalysis depends on Asp-177, which acts as the Proton acceptor; for phosphorylation activity. Proton donor; for dephosphorylation activity. The important for the catalytic mechanism of both phosphorylation and dephosphorylation stretch occupies residues 201-210 (LEIRGLGIIN). Glu-202 provides a ligand contact to Mg(2+). Residue Arg-243 is part of the active site. An important for the catalytic mechanism of dephosphorylation region spans residues 264 to 269 (PVRPGR).

Belongs to the HPrK/P family. In terms of assembly, homohexamer. Mg(2+) serves as cofactor.

The catalysed reaction is [HPr protein]-L-serine + ATP = [HPr protein]-O-phospho-L-serine + ADP + H(+). The enzyme catalyses [HPr protein]-O-phospho-L-serine + phosphate + H(+) = [HPr protein]-L-serine + diphosphate. In terms of biological role, catalyzes the ATP- as well as the pyrophosphate-dependent phosphorylation of a specific serine residue in HPr, a phosphocarrier protein of the phosphoenolpyruvate-dependent sugar phosphotransferase system (PTS). HprK/P also catalyzes the pyrophosphate-producing, inorganic phosphate-dependent dephosphorylation (phosphorolysis) of seryl-phosphorylated HPr (P-Ser-HPr). The two antagonistic activities of HprK/P are regulated by several intracellular metabolites, which change their concentration in response to the absence or presence of rapidly metabolisable carbon sources (glucose, fructose, etc.) in the growth medium. Also phosphorylates/dephosphorylates the HPr-like catabolite repression protein crh on a specific serine residue. Therefore, by controlling the phosphorylation state of HPr and crh, HPrK/P is a sensor enzyme that plays a major role in the regulation of carbon metabolism and sugar transport: it mediates carbon catabolite repression (CCR), and regulates PTS-catalyzed carbohydrate uptake and inducer exclusion. This Bacillus cereus (strain AH820) protein is HPr kinase/phosphorylase.